The following is a 379-amino-acid chain: Methionine aminopeptidase 1 (379 aa).

The C6H2-type zinc-finger motif lies at K7 to K60. Residues C10, C15, C24, C27, C37, C41, H49, and H53 each contribute to the Zn(2+) site. H192 serves as a coordination point for a protein. Zn(2+)-binding residues include D209, D220, and H289. A protein is bound at residue H296. Residues E322 and E353 each contribute to the Zn(2+) site. S373 carries the post-translational modification Phosphoserine.

It belongs to the peptidase M24A family. Methionine aminopeptidase type 1 subfamily. As to quaternary structure, associates with the 60S ribosomal subunit of the 80S translational complex. Zn(2+) is required as a cofactor. It depends on Co(2+) as a cofactor. Requires Mn(2+) as cofactor. The cofactor is Fe(2+).

The protein resides in the cytoplasm. The protein localises to the nucleus. It localises to the nucleolus. It catalyses the reaction Release of N-terminal amino acids, preferentially methionine, from peptides and arylamides.. Functionally, cotranslationally removes the N-terminal methionine from nascent proteins. The N-terminal methionine is often cleaved when the second residue in the primary sequence is small and uncharged (Met-Ala-, Cys, Gly, Pro, Ser, Thr, or Val). The protein is Methionine aminopeptidase 1 (fma1) of Schizosaccharomyces pombe (strain 972 / ATCC 24843) (Fission yeast).